A 338-amino-acid polypeptide reads, in one-letter code: Dihydroorotate dehydrogenase (quinone) (338 aa).

FMN is bound by residues 59–63 (AGLDK) and Thr83. Residue Lys63 participates in substrate binding. 108–112 (NRMGF) contacts substrate. Residues Asn136 and Asn169 each coordinate FMN. Asn169 is a substrate binding site. Ser172 functions as the Nucleophile in the catalytic mechanism. Position 174 (Asn174) interacts with substrate. FMN contacts are provided by Lys214 and Thr242. 243 to 244 (NT) contributes to the substrate binding site. FMN contacts are provided by residues Gly265, Gly294, and 315–316 (YS).

This sequence belongs to the dihydroorotate dehydrogenase family. Type 2 subfamily. In terms of assembly, monomer. The cofactor is FMN.

It localises to the cell membrane. The catalysed reaction is (S)-dihydroorotate + a quinone = orotate + a quinol. It functions in the pathway pyrimidine metabolism; UMP biosynthesis via de novo pathway; orotate from (S)-dihydroorotate (quinone route): step 1/1. Catalyzes the conversion of dihydroorotate to orotate with quinone as electron acceptor. The polypeptide is Dihydroorotate dehydrogenase (quinone) (Azoarcus sp. (strain BH72)).